Reading from the N-terminus, the 352-residue chain is Coproporphyrin III ferrochelatase (352 aa).

Positions 52 and 121 each coordinate Fe-coproporphyrin III. His181 and Glu269 together coordinate Fe(2+).

This sequence belongs to the ferrochelatase family.

The protein localises to the cytoplasm. It carries out the reaction Fe-coproporphyrin III + 2 H(+) = coproporphyrin III + Fe(2+). Its pathway is porphyrin-containing compound metabolism; protoheme biosynthesis. Functionally, involved in coproporphyrin-dependent heme b biosynthesis. Catalyzes the insertion of ferrous iron into coproporphyrin III to form Fe-coproporphyrin III. In Nocardia farcinica (strain IFM 10152), this protein is Coproporphyrin III ferrochelatase.